Consider the following 215-residue polypeptide: Ribonuclease HII (215 aa).

The RNase H type-2 domain maps to 19–214; it reads KNVIGVDEAG…KILETEEEKT (196 aa). Residues aspartate 25, glutamate 26, and aspartate 121 each coordinate a divalent metal cation.

It belongs to the RNase HII family. Requires Mn(2+) as cofactor. It depends on Mg(2+) as a cofactor.

The protein resides in the cytoplasm. It carries out the reaction Endonucleolytic cleavage to 5'-phosphomonoester.. Functionally, endonuclease that specifically degrades the RNA of RNA-DNA hybrids. The protein is Ribonuclease HII of Fusobacterium nucleatum subsp. nucleatum (strain ATCC 25586 / DSM 15643 / BCRC 10681 / CIP 101130 / JCM 8532 / KCTC 2640 / LMG 13131 / VPI 4355).